Consider the following 407-residue polypeptide: Methylthioribose kinase (407 aa).

ATP is bound by residues N40, K57, and 111–113; that span reads EDL. D229 is a substrate binding site. An ATP-binding site is contributed by 246 to 248; that stretch reads DAE. Position 344 (R344) interacts with substrate.

This sequence belongs to the methylthioribose kinase family. In terms of assembly, homodimer.

The enzyme catalyses 5-(methylsulfanyl)-D-ribose + ATP = 5-(methylsulfanyl)-alpha-D-ribose 1-phosphate + ADP + H(+). Its pathway is amino-acid biosynthesis; L-methionine biosynthesis via salvage pathway; S-methyl-5-thio-alpha-D-ribose 1-phosphate from S-methyl-5'-thioadenosine (hydrolase route): step 2/2. Its function is as follows. Catalyzes the phosphorylation of methylthioribose into methylthioribose-1-phosphate. The protein is Methylthioribose kinase of Yersinia pseudotuberculosis serotype O:3 (strain YPIII).